A 490-amino-acid polypeptide reads, in one-letter code: Muscarinic acetylcholine receptor M4 (490 aa).

The Extracellular segment spans residues 1 to 42; sequence MHNLSAQPWQAKMANLTYDNVTLSNRSEVAIQPPTNYKTVEL. Asparagine 3, asparagine 15, asparagine 20, and asparagine 25 each carry an N-linked (GlcNAc...) asparagine glycan. The chain crosses the membrane as a helical span at residues 43–64; sequence VFIATVTGSLSLVTVVGNILVM. The Cytoplasmic segment spans residues 65 to 78; it reads LSIKVNRQLQTVNN. Residues 79-99 traverse the membrane as a helical segment; that stretch reads YFLFSLACADLIIGVFSMNLY. The Extracellular segment spans residues 100-116; sequence TVYIIKGYWPLGAVVCD. Residues cysteine 115 and cysteine 195 are joined by a disulfide bond. Residues 117–138 traverse the membrane as a helical segment; the sequence is LWLALDYVVSNASVMNLLIISF. Residues 139–158 lie on the Cytoplasmic side of the membrane; sequence DRYFCVTKPLTYPARRTTKM. A helical transmembrane segment spans residues 159-181; the sequence is AGLMIAAAWILSFILWAPAILFW. The Extracellular segment spans residues 182–203; the sequence is QFIVGKRTVHERECYIQFLSNP. Residues 204–226 form a helical membrane-spanning segment; that stretch reads AVTFGTAIAAFYLPVVIMTVLYI. At 227–412 the chain is on the cytoplasmic side; it reads HISLASRSRV…AAREKKVTRT (186 aa). The segment covering 236-250 has biased composition (basic residues); the sequence is VRRHKPESRKERKGK. Residues 236 to 343 form a disordered region; sequence VRRHKPESRK…HPRVNPTSKW (108 aa). Positions 270-285 are enriched in basic and acidic residues; it reads RAVEVKEEVRNGKVDD. 2 stretches are compositionally biased toward polar residues: residues 287–296 and 304–314; these read PSAQTEATGQ and NESSTVSMTQT. Residues 413–433 form a helical membrane-spanning segment; the sequence is IFAILLAFILTWTPYNVMVLI. Topologically, residues 434-447 are extracellular; sequence NTFCETCVPETVWS. The chain crosses the membrane as a helical span at residues 448-467; sequence IGYWLCYVNSTINPACYALC. Over 468 to 490 the chain is Cytoplasmic; sequence NATFKKTFKHLLMCQYRNIGTAR.

It belongs to the G-protein coupled receptor 1 family. Muscarinic acetylcholine receptor subfamily. CHRM4 sub-subfamily. Expressed in heart and brain.

The protein resides in the cell membrane. Its subcellular location is the postsynaptic cell membrane. Functionally, the muscarinic acetylcholine receptor mediates various cellular responses, including inhibition of adenylate cyclase, breakdown of phosphoinositides and modulation of potassium channels through the action of G proteins. Primary transducing effect is inhibition of adenylate cyclase. May couple to multiple functional responses in cell lines. In Gallus gallus (Chicken), this protein is Muscarinic acetylcholine receptor M4 (CHRM4).